Here is a 309-residue protein sequence, read N- to C-terminus: Foldase protein PrsA (309 aa).

The N-terminal stretch at 1–20 (MKKKIVAGAVTLLSVAVLAA) is a signal peptide. Cys-21 carries the N-palmitoyl cysteine lipid modification. The S-diacylglycerol cysteine moiety is linked to residue Cys-21. The PpiC domain maps to 144–241 (TPEVTAQIIK…ASYYIVKLVS (98 aa)).

Belongs to the PrsA family.

It is found in the cell membrane. The catalysed reaction is [protein]-peptidylproline (omega=180) = [protein]-peptidylproline (omega=0). Its function is as follows. Plays a major role in protein secretion by helping the post-translocational extracellular folding of several secreted proteins. The sequence is that of Foldase protein PrsA from Streptococcus gordonii (strain Challis / ATCC 35105 / BCRC 15272 / CH1 / DL1 / V288).